Consider the following 577-residue polypeptide: Arginine--tRNA ligase (577 aa).

The 'HIGH' region motif lies at 122 to 132 (PNVAKEMHVGH).

The protein belongs to the class-I aminoacyl-tRNA synthetase family. As to quaternary structure, monomer.

Its subcellular location is the cytoplasm. The enzyme catalyses tRNA(Arg) + L-arginine + ATP = L-arginyl-tRNA(Arg) + AMP + diphosphate. This Salmonella gallinarum (strain 287/91 / NCTC 13346) protein is Arginine--tRNA ligase.